The chain runs to 262 residues: Dihydroorotate dehydrogenase B (NAD(+)), electron transfer subunit (262 aa).

The 101-residue stretch at 2–102 folds into the FAD-binding FR-type domain; sequence SKVFDAKVLA…MGPLGRGFTL (101 aa). Residues 53 to 56, 70 to 72, and 77 to 78 contribute to the FAD site; these read RPIS, LFR, and GT. Cys224, Cys229, Cys232, and Cys248 together coordinate [2Fe-2S] cluster.

Belongs to the PyrK family. As to quaternary structure, heterotetramer of 2 PyrK and 2 PyrD type B subunits. However, the metal reductase complex seems to be composed of a heterooctamer of 4 PyrK and 4 PyrD subunits. FAD is required as a cofactor. It depends on [2Fe-2S] cluster as a cofactor.

It localises to the cytoplasm. It functions in the pathway pyrimidine metabolism; UMP biosynthesis via de novo pathway; orotate from (S)-dihydroorotate (NAD(+) route): step 1/1. In terms of biological role, responsible for channeling the electrons from the oxidation of dihydroorotate from the FMN redox center in the PyrD type B subunit to the ultimate electron acceptor NAD(+). Its function is as follows. Together with PyrD, also forms a metal reductase complex able to reduce Fe(III)-chelates to Fe(II)-chelates, as well as soluble Cr(VI) and U(VI), using NADH as electron donor. To a lesser extent, can also use NADPH as an electron donor. Is unable to reduce riboflavin and FMN with NADH as electron donor. May have an in vivo role in metal reduction in D.reducens, which is an organism capable of reducing contaminant heavy metals and radionuclides. The polypeptide is Dihydroorotate dehydrogenase B (NAD(+)), electron transfer subunit (Desulforamulus reducens (strain ATCC BAA-1160 / DSM 100696 / MI-1) (Desulfotomaculum reducens)).